A 188-amino-acid polypeptide reads, in one-letter code: dCTP deaminase (188 aa).

DCTP is bound by residues 111-116 (KSTYAR), 135-137 (VLE), Q156, Y170, and Q180. E137 serves as the catalytic Proton donor/acceptor.

The protein belongs to the dCTP deaminase family. In terms of assembly, homotrimer.

It catalyses the reaction dCTP + H2O + H(+) = dUTP + NH4(+). It functions in the pathway pyrimidine metabolism; dUMP biosynthesis; dUMP from dCTP (dUTP route): step 1/2. In terms of biological role, catalyzes the deamination of dCTP to dUTP. In Protochlamydia amoebophila (strain UWE25), this protein is dCTP deaminase.